A 655-amino-acid chain; its full sequence is tRNA 5-methylaminomethyl-2-thiouridine biosynthesis bifunctional protein MnmC (655 aa).

A tRNA (mnm(5)s(2)U34)-methyltransferase region spans residues 1-236 (MTDPLVPAVL…KRAMLVGRFA (236 aa)). Residues 260 to 655 (IGTGLAGCAA…LRALRQGTAS (396 aa)) form an FAD-dependent cmnm(5)s(2)U34 oxidoreductase region.

In the N-terminal section; belongs to the methyltransferase superfamily. tRNA (mnm(5)s(2)U34)-methyltransferase family. This sequence in the C-terminal section; belongs to the DAO family. It depends on FAD as a cofactor.

It localises to the cytoplasm. It carries out the reaction 5-aminomethyl-2-thiouridine(34) in tRNA + S-adenosyl-L-methionine = 5-methylaminomethyl-2-thiouridine(34) in tRNA + S-adenosyl-L-homocysteine + H(+). In terms of biological role, catalyzes the last two steps in the biosynthesis of 5-methylaminomethyl-2-thiouridine (mnm(5)s(2)U) at the wobble position (U34) in tRNA. Catalyzes the FAD-dependent demodification of cmnm(5)s(2)U34 to nm(5)s(2)U34, followed by the transfer of a methyl group from S-adenosyl-L-methionine to nm(5)s(2)U34, to form mnm(5)s(2)U34. In Paraburkholderia phymatum (strain DSM 17167 / CIP 108236 / LMG 21445 / STM815) (Burkholderia phymatum), this protein is tRNA 5-methylaminomethyl-2-thiouridine biosynthesis bifunctional protein MnmC.